Consider the following 438-residue polypeptide: Glutamyl-tRNA reductase (438 aa).

Substrate is bound by residues 49 to 52 (TCNR), serine 109, 114 to 116 (EGQ), and glutamine 120. The active-site Nucleophile is the cysteine 50. NADP(+) is bound at residue 197-202 (GAGKMS).

It belongs to the glutamyl-tRNA reductase family. As to quaternary structure, homodimer.

The catalysed reaction is (S)-4-amino-5-oxopentanoate + tRNA(Glu) + NADP(+) = L-glutamyl-tRNA(Glu) + NADPH + H(+). It functions in the pathway porphyrin-containing compound metabolism; protoporphyrin-IX biosynthesis; 5-aminolevulinate from L-glutamyl-tRNA(Glu): step 1/2. The protein operates within porphyrin-containing compound metabolism; chlorophyll biosynthesis. In terms of biological role, catalyzes the NADPH-dependent reduction of glutamyl-tRNA(Glu) to glutamate 1-semialdehyde (GSA). This chain is Glutamyl-tRNA reductase, found in Synechococcus elongatus (strain ATCC 33912 / PCC 7942 / FACHB-805) (Anacystis nidulans R2).